The sequence spans 166 residues: NAD(P)H-quinone oxidoreductase subunit I, chloroplastic (166 aa).

2 consecutive 4Fe-4S ferredoxin-type domains span residues G55 to K84 and L95 to E124. Positions 64, 67, 70, 74, 104, 107, 110, and 114 each coordinate [4Fe-4S] cluster.

It belongs to the complex I 23 kDa subunit family. In terms of assembly, NDH is composed of at least 16 different subunits, 5 of which are encoded in the nucleus. It depends on [4Fe-4S] cluster as a cofactor.

The protein resides in the plastid. The protein localises to the chloroplast thylakoid membrane. The enzyme catalyses a plastoquinone + NADH + (n+1) H(+)(in) = a plastoquinol + NAD(+) + n H(+)(out). The catalysed reaction is a plastoquinone + NADPH + (n+1) H(+)(in) = a plastoquinol + NADP(+) + n H(+)(out). NDH shuttles electrons from NAD(P)H:plastoquinone, via FMN and iron-sulfur (Fe-S) centers, to quinones in the photosynthetic chain and possibly in a chloroplast respiratory chain. The immediate electron acceptor for the enzyme in this species is believed to be plastoquinone. Couples the redox reaction to proton translocation, and thus conserves the redox energy in a proton gradient. This Oteiza scandens (Climbing oteiza) protein is NAD(P)H-quinone oxidoreductase subunit I, chloroplastic.